The following is a 497-amino-acid chain: Putative glucuronosyltransferase PGSIP8 (497 aa).

A helical transmembrane segment spans residues 3–23 (LQRGFVFLSLVLSFMIIETTA). The Mn(2+) site is built by Asp165 and Asp167. 5 helical membrane passes run 319–339 (YSAE…IIVV), 365–385 (GFKL…FFTI), 388–408 (TIHP…LSSI), 418–438 (LPVL…AFPW), and 442–462 (GVVR…FVWV).

The protein belongs to the glycosyltransferase 8 family. Glycogenin subfamily. It depends on Mn(2+) as a cofactor.

The protein localises to the membrane. In Arabidopsis thaliana (Mouse-ear cress), this protein is Putative glucuronosyltransferase PGSIP8 (PGSIP8).